The chain runs to 152 residues: Zinc finger SWIM domain-containing protein 7 (152 aa).

Residues 76–114 (YTCLASCHYCSCPAFSFSVLRKSDSLLCKHLLAIYLSQL) form an SWIM-type zinc finger.

It belongs to the SWS1 family. As to quaternary structure, interacts with RAD51D and XRCC3; involved in homologous recombination repair. Interacts with SWSAP1; they form a functional complex involved in homologous recombination repair and stabilize each other.

The protein localises to the nucleus. In terms of biological role, involved in early stages of the homologous recombination repair (HRR) pathway of double-stranded DNA breaks arising during DNA replication or induced by DNA-damaging agents. Required for meiotic progression, hence for fertility. The polypeptide is Zinc finger SWIM domain-containing protein 7 (Zswim7) (Mus musculus (Mouse)).